A 742-amino-acid chain; its full sequence is MSVQEDGAARPEPDVLRRHDSLYGDAEKVSNNKRHGAGGSWARTLQLAFQSIGVVYGDVGTSPLYVYSSTFPNGIKHPDDLVGVLSLILYTLILIPMVKYVFIVLYANDNGDGGTFALYSLISRHAKIRMIPNDQTEDANVSNYSIEAPSSQLRRAEWVKQKLESSNAAKIALFTITILGTSMVMGDGTLTPAISVLSAVSGIREKAPNLTQSQVVWISVAILFVLFSMQRFGTDKVGYTFAPVISVWFLLIAGIGMYNLTVHEITILRAFNPKYIVDYFRRNGKEAWVSLGGVVLCITGTEAMFADLGHFNIRAIQLSFTCVLFPSVALCYMGQAAYLRKFPENVGDTFYRSIPAPLFWPVFVVAIMGAIIASQAMLSGAFAILSKALSLGCFPRVEVVHTSNKYEGQVYIPEVNFLIGAASVAVTLAFQTTANIGNAYGICVVTVFSITTHLMTVVMLLIWKVRLPFIAAFYAAFGLAEFLYLSSILSKFAEGGYLPFCFSLVLMALMATWHYVHVKRYWYELDRVVPAAETTALLARRDVRRVPGVGLLYSELVQGIPPVFPRLVDKIPSVHAVFVFMSIKHLPVPRVAPAERFIFRRVVGADAGAGHRLFRCVARYGYTDQLEGAKEFAAFLLDRLKVFVHEESVFACSRGDNDDDDAMRRAQAMAEEEKRVIDAEAERGVVYLMGEANVTAAAGSSVMKRIVVNYVYTLLRKNLREGHKALSVPKDQLLKVGITYEI.

Topologically, residues 1-46 (MSVQEDGAARPEPDVLRRHDSLYGDAEKVSNNKRHGAGGSWARTLQ) are cytoplasmic. Residues 47–67 (LAFQSIGVVYGDVGTSPLYVY) traverse the membrane as a helical segment. At 68 to 83 (SSTFPNGIKHPDDLVG) the chain is on the extracellular side. A helical membrane pass occupies residues 84–104 (VLSLILYTLILIPMVKYVFIV). The Cytoplasmic portion of the chain corresponds to 105-170 (LYANDNGDGG…QKLESSNAAK (66 aa)). The helical transmembrane segment at 171-191 (IALFTITILGTSMVMGDGTLT) threads the bilayer. The Extracellular portion of the chain corresponds to 192–206 (PAISVLSAVSGIREK). A helical transmembrane segment spans residues 207–227 (APNLTQSQVVWISVAILFVLF). Residues 228-236 (SMQRFGTDK) are Cytoplasmic-facing. The chain crosses the membrane as a helical span at residues 237-257 (VGYTFAPVISVWFLLIAGIGM). At 258-287 (YNLTVHEITILRAFNPKYIVDYFRRNGKEA) the chain is on the extracellular side. N-linked (GlcNAc...) asparagine glycosylation occurs at N259. A helical transmembrane segment spans residues 288–308 (WVSLGGVVLCITGTEAMFADL). Residues 309 to 317 (GHFNIRAIQ) are Cytoplasmic-facing. A helical membrane pass occupies residues 318 to 338 (LSFTCVLFPSVALCYMGQAAY). Over 339–352 (LRKFPENVGDTFYR) the chain is Extracellular. A helical membrane pass occupies residues 353 to 373 (SIPAPLFWPVFVVAIMGAIIA). The Cytoplasmic portion of the chain corresponds to 374–409 (SQAMLSGAFAILSKALSLGCFPRVEVVHTSNKYEGQ). Residues 410-430 (VYIPEVNFLIGAASVAVTLAF) traverse the membrane as a helical segment. Over 431–441 (QTTANIGNAYG) the chain is Extracellular. A helical transmembrane segment spans residues 442–462 (ICVVTVFSITTHLMTVVMLLI). Residues 463–468 (WKVRLP) are Cytoplasmic-facing. The chain crosses the membrane as a helical span at residues 469 to 489 (FIAAFYAAFGLAEFLYLSSIL). Over 490–495 (SKFAEG) the chain is Extracellular. The helical transmembrane segment at 496-516 (GYLPFCFSLVLMALMATWHYV) threads the bilayer. Residues 517–742 (HVKRYWYELD…LLKVGITYEI (226 aa)) lie on the Cytoplasmic side of the membrane.

This sequence belongs to the HAK/KUP transporter (TC 2.A.72.3) family.

It localises to the membrane. In terms of biological role, high-affinity potassium transporter. The sequence is that of Potassium transporter 19 (HAK19) from Oryza sativa subsp. japonica (Rice).